The sequence spans 1109 residues: Protein argonaute 3 (1109 aa).

Residues 1-13 (MAGRGGRDPRRGY) show a composition bias toward basic and acidic residues. Disordered regions lie at residues 1 to 83 (MAGR…GLVR) and 125 to 220 (DHRD…PLSK). Gly residues-rich tracts occupy residues 14 to 30 (DGGY…GGTN), 37 to 54 (RGGG…GGRG), and 62 to 83 (DVLG…GLVR). Residues 125 to 134 (DHRDQHDHQS) are compositionally biased toward basic and acidic residues. Residues 135–161 (QRHHHRHHHHQRQRHHHHHQRQQRRGS) are compositionally biased toward basic residues. In terms of domain architecture, PAZ spans 411–521 (SVLDLVKTMK…VPIEFCNIPE (111 aa)). Over residues 527 to 545 (VARLDDKKSDNKGEQEKPS) the composition is skewed to basic and acidic residues. A disordered region spans residues 527–548 (VARLDDKKSDNKGEQEKPSTKT). Residues 720-1023 (LLFCPMLNRC…AAYRGRLYYE (304 aa)) enclose the Piwi domain.

This sequence belongs to the argonaute family. Ago subfamily.

Functionally, probably involved in the RNA silencing pathway. May bind to short RNAs such as microRNAs (miRNAs) or short interfering RNAs (siRNAs), and represses the translation of mRNAs which are complementary to them. In Oryza sativa subsp. japonica (Rice), this protein is Protein argonaute 3 (AGO3).